The chain runs to 423 residues: Phosphoribosylamine--glycine ligase (423 aa).

The 206-residue stretch at 107 to 312 (KDLCARYDIP…LLPILYATAT (206 aa)) folds into the ATP-grasp domain. Position 133 to 193 (133 to 193 (VRAQGAPIVI…EAFLDGEEAS (61 aa))) interacts with ATP. Glutamate 282 and asparagine 284 together coordinate Mg(2+).

It belongs to the GARS family. The cofactor is Mg(2+). Mn(2+) is required as a cofactor.

The enzyme catalyses 5-phospho-beta-D-ribosylamine + glycine + ATP = N(1)-(5-phospho-beta-D-ribosyl)glycinamide + ADP + phosphate + H(+). The protein operates within purine metabolism; IMP biosynthesis via de novo pathway; N(1)-(5-phospho-D-ribosyl)glycinamide from 5-phospho-alpha-D-ribose 1-diphosphate: step 2/2. The polypeptide is Phosphoribosylamine--glycine ligase (Agrobacterium fabrum (strain C58 / ATCC 33970) (Agrobacterium tumefaciens (strain C58))).